We begin with the raw amino-acid sequence, 212 residues long: Orotate phosphoribosyltransferase (212 aa).

5-phospho-alpha-D-ribose 1-diphosphate-binding positions include Arg97, Lys101, His103, and 123–131 (EDLISTGGS). Residue Ser127 coordinates orotate.

It belongs to the purine/pyrimidine phosphoribosyltransferase family. PyrE subfamily. Homodimer. The cofactor is Mg(2+).

The enzyme catalyses orotidine 5'-phosphate + diphosphate = orotate + 5-phospho-alpha-D-ribose 1-diphosphate. The protein operates within pyrimidine metabolism; UMP biosynthesis via de novo pathway; UMP from orotate: step 1/2. In terms of biological role, catalyzes the transfer of a ribosyl phosphate group from 5-phosphoribose 1-diphosphate to orotate, leading to the formation of orotidine monophosphate (OMP). In Bacteroides fragilis (strain ATCC 25285 / DSM 2151 / CCUG 4856 / JCM 11019 / LMG 10263 / NCTC 9343 / Onslow / VPI 2553 / EN-2), this protein is Orotate phosphoribosyltransferase.